A 341-amino-acid polypeptide reads, in one-letter code: Undecaprenyl-phosphate 4-deoxy-4-formamido-L-arabinose transferase (341 aa).

The next 2 membrane-spanning stretches (helical) occupy residues 235 to 255 (LSIV…ALIV) and 269 to 289 (LFVL…GMGL).

Belongs to the glycosyltransferase 2 family.

It is found in the cell inner membrane. It catalyses the reaction UDP-4-deoxy-4-formamido-beta-L-arabinose + di-trans,octa-cis-undecaprenyl phosphate = 4-deoxy-4-formamido-alpha-L-arabinopyranosyl di-trans,octa-cis-undecaprenyl phosphate + UDP. The protein operates within glycolipid biosynthesis; 4-amino-4-deoxy-alpha-L-arabinose undecaprenyl phosphate biosynthesis; 4-amino-4-deoxy-alpha-L-arabinose undecaprenyl phosphate from UDP-4-deoxy-4-formamido-beta-L-arabinose and undecaprenyl phosphate: step 1/2. It functions in the pathway bacterial outer membrane biogenesis; lipopolysaccharide biosynthesis. Its function is as follows. Catalyzes the transfer of 4-deoxy-4-formamido-L-arabinose from UDP to undecaprenyl phosphate. The modified arabinose is attached to lipid A and is required for resistance to polymyxin and cationic antimicrobial peptides. The polypeptide is Undecaprenyl-phosphate 4-deoxy-4-formamido-L-arabinose transferase (Pseudomonas fluorescens (strain SBW25)).